A 126-amino-acid polypeptide reads, in one-letter code: Histone H2B.5 (126 aa).

A compositionally biased stretch (basic and acidic residues) spans 1-27 (MAPKAEKKPSEKAPKADKKITKEGGSE). Residues 1-34 (MAPKAEKKPSEKAPKADKKITKEGGSERKKKTKK) form a disordered region. A N,N,N-trimethylalanine; alternate modification is found at alanine 2. Alanine 2 carries the post-translational modification N,N-dimethylalanine; alternate. Alanine 2 bears the N-methylalanine; alternate mark. Lysine 4 carries the N6-methyllysine modification. N6-acetyllysine occurs at positions 7, 12, 18, and 19. Residue lysine 122 forms a Glycyl lysine isopeptide (Lys-Gly) (interchain with G-Cter in ubiquitin) linkage.

This sequence belongs to the histone H2B family. The nucleosome is a histone octamer containing two molecules each of H2A, H2B, H3 and H4 assembled in one H3-H4 heterotetramer and two H2A-H2B heterodimers. The octamer wraps approximately 147 bp of DNA. Can be acetylated to form H2BK6ac, H2BK33ac and H2BK34ac. In terms of processing, monoubiquitinated by BRE1 to form H2BK143ub1 and deubiquitinated by UBP26. Required for heterochromatic histone H3 di- and trimethylation at H3K4me. May give a specific tag for epigenetic transcriptional activation.

Its subcellular location is the nucleus. The protein resides in the chromosome. Functionally, core component of nucleosome. Nucleosomes wrap and compact DNA into chromatin, limiting DNA accessibility to the cellular machineries which require DNA as a template. Histones thereby play a central role in transcription regulation, DNA repair, DNA replication and chromosomal stability. DNA accessibility is regulated via a complex set of post-translational modifications of histones, also called histone code, and nucleosome remodeling. This chain is Histone H2B.5, found in Arabidopsis thaliana (Mouse-ear cress).